The following is a 257-amino-acid chain: 5'-nucleotidase SurE (257 aa).

Residues aspartate 11, aspartate 12, serine 42, and asparagine 99 each coordinate a divalent metal cation.

Belongs to the SurE nucleotidase family. It depends on a divalent metal cation as a cofactor.

The protein localises to the cytoplasm. It carries out the reaction a ribonucleoside 5'-phosphate + H2O = a ribonucleoside + phosphate. Functionally, nucleotidase that shows phosphatase activity on nucleoside 5'-monophosphates. The sequence is that of 5'-nucleotidase SurE from Flavobacterium psychrophilum (strain ATCC 49511 / DSM 21280 / CIP 103535 / JIP02/86).